The primary structure comprises 102 residues: MYAIIQTGGKQIKVEEGQTVYVEKLAAEAGETVTFDNVLFVGGENVKVGSPTVEGATVTGKVEKQGRAKKITVFKYKPKKNQHKKQGHRQPYTKVVIEKINA.

This sequence belongs to the bacterial ribosomal protein bL21 family. In terms of assembly, part of the 50S ribosomal subunit. Contacts protein L20.

This protein binds to 23S rRNA in the presence of protein L20. The protein is Large ribosomal subunit protein bL21 of Bacillus licheniformis (strain ATCC 14580 / DSM 13 / JCM 2505 / CCUG 7422 / NBRC 12200 / NCIMB 9375 / NCTC 10341 / NRRL NRS-1264 / Gibson 46).